The primary structure comprises 2116 residues: Non-structural polyprotein p200 (2116 aa).

A required for efficient proteolysis and P150-P90 interaction region spans residues 36 to 49; it reads EVRDVVTAAQKRAI. The region spanning 57 to 247 is the Alphavirus-like MT domain; sequence VFTQMQVSDH…TRPCTTRIYQ (191 aa). A disordered region spans residues 715-782; the sequence is GQLAATSPPP…PTPAEPADRA (68 aa). Composition is skewed to pro residues over residues 721-730 and 745-776; these read SPPPGDPPPP and TPPP…PTPA. Short sequence motifs (pxxPxR; class II SH3-binding) lie at residues 727 to 732, 747 to 752, and 761 to 766; these read PPPPRR, PPAPVR, and PPAPPR. In terms of domain architecture, Macro spans 806–985; sequence SDIVESYARA…LTHASVLVGA (180 aa). The disordered stretch occupies residues 991–1030; sequence RVSPPPTEPLASCPAGGPGRPAQRSASPPATPLGDATAPE. The Peptidase C27 domain occupies 1000–1301; that stretch reads LASCPAGGPG…WLAVPLSRGG (302 aa). Cysteine 1152 (for cysteine protease activity) is an active-site residue. An interaction with host CALM1 region spans residues 1152–1183; it reads CWLRAAANVAQVARACGAYTSAGCPKCAYGRA. Positions 1175, 1178, 1227, and 1273 each coordinate Zn(2+). The tract at residues 1193–1228 is EF-hand-like; the sequence is FAALSQRWSASHADASPDGTGDPLDPLMETVGCACS. The For cysteine protease activity role is filled by histidine 1273. Residues 1320-1468 form the (+)RNA virus helicase ATP-binding domain; that stretch reads EVRRLGDDAM…VPDRWPTERS (149 aa). 1352-1359 contacts a ribonucleoside 5'-triphosphate; that stretch reads MAAGAGKT. The 141-residue stretch at 1469–1609 folds into the (+)RNA virus helicase C-terminal domain; that stretch reads RHTWRFPDCW…ELKEVPAGID (141 aa). The segment at 1700 to 1900 is involved in P150-P90 interaction; it reads YRAGEDGSTL…VELEISAALL (201 aa). One can recognise a RdRp catalytic domain in the interval 1870-1981; that stretch reads TNAIEVDFTE…FLPEGARSAA (112 aa). Residues 1902-1906 carry the Human RB1 binding motif; that stretch reads LPCAE.

As to quaternary structure, interacts with RNA-directed RNA polymerase p90. Interacts with host CALM1; this interaction is necessary for the protease activity and viral infectivity. Interacts with host C1QBP. Interacts with the capsid protein. In terms of assembly, interacts with human RB1/retinoblastoma protein. Interacts with protease/methyltransferase p150. It depends on Zn(2+) as a cofactor. In terms of processing, specific enzymatic cleavage by its own cysteine protease yield mature proteins p150 and p90.

Its subcellular location is the host membrane. It localises to the host cytoplasm. The protein localises to the host perinuclear region. It carries out the reaction RNA(n) + a ribonucleoside 5'-triphosphate = RNA(n+1) + diphosphate. The enzyme catalyses a ribonucleoside 5'-triphosphate + H2O = a ribonucleoside 5'-diphosphate + phosphate + H(+). It catalyses the reaction ATP + H2O = ADP + phosphate + H(+). In terms of biological role, probable principal replicase for the negative-strand DNA, which replicates the 40S (+) genomic RNA into (-) antigenomic RNA. It cannot replicate the (-) into (+) until cleaved into p150 and p90 mature proteins. Protease that cleaves the precursor polyprotein into two mature products. Together with RNA-directed RNA polymerase p90, replicates the 40S genomic and antigenomic RNA by recognizing replications specific signals. The heterodimer P150/p90 is probably the principal replicase for positive-strand genomic RNA and the 24S subgenomic RNA, which codes for structural proteins. Responsible for the mRNA-capping of the viral mRNAs. This function is necessary since all viral RNAs are synthesized in the cytoplasm, and host capping enzymes are restricted to the nucleus. Forms fibers late in the infection that may be involved in cell-to-cell spread of the virus RNA in the absence of virus particle formation. Its function is as follows. Together with protease/methyltransferase p150, replicates the 40S genomic and antigenomic RNA by recognizing replications specific signals. The heterodimer P150/p90 is probably the principal replicase for positive-strand genomic RNA and the 24S subgenomic RNA, which codes for structural proteins. A helicase activity is probably also present. The protein is Non-structural polyprotein p200 of Homo sapiens (Human).